Reading from the N-terminus, the 839-residue chain is Taste receptor type 1 member 2 (839 aa).

The signal sequence occupies residues 1-19 (MGPRATTICSLFFLLWVLA). Over 20–566 (EPAENSDFYL…AFLEWHEAPT (547 aa)) the chain is Extracellular. Residues asparagine 84, asparagine 248, asparagine 292, asparagine 312, asparagine 368, asparagine 428, asparagine 487, and asparagine 527 are each glycosylated (N-linked (GlcNAc...) asparagine). Residues 567-587 (IAVALLAALGFLSTLAILVIF) traverse the membrane as a helical segment. Residues 588–602 (WRHFQTPMVRSAGGP) lie on the Cytoplasmic side of the membrane. A helical transmembrane segment spans residues 603–623 (MCFLMLTLLLVAYMVVPVYVG). Residues 624-635 (PPKVSTCLCRQA) lie on the Extracellular side of the membrane. A helical membrane pass occupies residues 636–656 (LFPLCFTICISCIAVRSFQII). The Cytoplasmic segment spans residues 657-681 (CAFKMASRFPRAYSYWVRYQGPYVS). The chain crosses the membrane as a helical span at residues 682-702 (MAFITVLKMVIVVIGMLATGL). The Extracellular segment spans residues 703 to 727 (NPTTRTDPDDPKIMIVSCNPNYRNS). The helical transmembrane segment at 728 to 748 (LLFNTSLDLLLSVVGFSFANM) threads the bilayer. Residues 749-760 (GKELPTNYNEAK) are Cytoplasmic-facing. The chain crosses the membrane as a helical span at residues 761–781 (FITLSMTFYFTSSISLCTFMS). The Extracellular portion of the chain corresponds to 782–784 (AYS). Residues 785-805 (GVLVTIVDLLVTVLNLLAISL) form a helical membrane-spanning segment. Residues 806-839 (GYFGPKCYMILFYPERNTPAYFNSVIQGYTMTRD) lie on the Cytoplasmic side of the membrane.

The protein belongs to the G-protein coupled receptor 3 family. TAS1R subfamily. Forms heterodimers with TAS1R3.

It is found in the cell membrane. In terms of biological role, putative taste receptor. TAS1R2/TAS1R3 recognizes diverse natural and synthetic sweeteners. The sequence is that of Taste receptor type 1 member 2 (TAS1R2) from Pongo pygmaeus (Bornean orangutan).